Reading from the N-terminus, the 258-residue chain is Transcription initiation factor TFIID subunit 9B (258 aa).

Residue Met1 is modified to N-acetylmethionine. Position 147 is a phosphoserine (Ser147). Phosphothreonine occurs at positions 159 and 174. Ser177 carries the post-translational modification Phosphoserine. Over residues 227-236 (SSQSTATDSN) the composition is skewed to polar residues. Residues 227-258 (SSQSTATDSNPLKRKHDDDDDDDDDDDDNDTM) form a disordered region. Positions 244–258 (DDDDDDDDDDDNDTM) are enriched in acidic residues.

This sequence belongs to the TAF9 family. As to quaternary structure, binds TAF5 and TAF6. Component of TFIID and the TATA-binding protein-free TAF complex (TFTC). TFIID is composed of TATA binding protein (TBP) and a number of TBP-associated factors (TAFs). Binds N-terminal domain of p53/TP53 which is essential for transcription.

Its subcellular location is the nucleus. Its function is as follows. Essential for cell viability. TAF9 and TAF9L are involved in transcriptional activation as well as repression of distinct but overlapping sets of genes. May have a role in gene regulation associated with apoptosis. TAFs are components of the transcription factor IID (TFIID) complex, the TBP-free TAFII complex (TFTC), the PCAF histone acetylase complex and the STAGA transcription coactivator-HAT complex. TFIID or TFTC are essential for the regulation of RNA polymerase II-mediated transcription. This chain is Transcription initiation factor TFIID subunit 9B (Taf9b), found in Rattus norvegicus (Rat).